The sequence spans 278 residues: NAD-dependent protein deacylase (278 aa).

Positions 22–270 (RSRIFHRDSA…PEYIREFLTT (249 aa)) constitute a Deacetylase sirtuin-type domain. 46 to 65 (GAGISAESGIRTFRADDGLW) contacts NAD(+). Substrate is bound by residues Tyr-90 and Arg-93. 127–130 (QNID) contacts NAD(+). His-145 functions as the Proton acceptor in the catalytic mechanism. The Zn(2+) site is built by Cys-153 and Cys-172. NAD(+) is bound by residues 212-214 (GTS), 238-240 (NLE), and Ala-256.

It belongs to the sirtuin family. Class III subfamily. It depends on Zn(2+) as a cofactor.

Its subcellular location is the cytoplasm. The enzyme catalyses N(6)-acetyl-L-lysyl-[protein] + NAD(+) + H2O = 2''-O-acetyl-ADP-D-ribose + nicotinamide + L-lysyl-[protein]. The catalysed reaction is N(6)-succinyl-L-lysyl-[protein] + NAD(+) + H2O = 2''-O-succinyl-ADP-D-ribose + nicotinamide + L-lysyl-[protein]. It carries out the reaction N(6)-(2-hydroxyisobutanoyl)-L-lysyl-[protein] + NAD(+) + H2O = 2''-O-(2-hydroxyisobutanoyl)-ADP-D-ribose + nicotinamide + L-lysyl-[protein]. In terms of biological role, NAD-dependent lysine deacetylase that specifically removes acetyl groups on target proteins. Also acts as a protein-lysine deacylase by mediating protein desuccinylation and de-2-hydroxyisobutyrylation. Modulates the activities of several proteins which are inactive in their acylated form. The chain is NAD-dependent protein deacylase from Yersinia pestis.